The chain runs to 430 residues: Serine hydroxymethyltransferase (430 aa).

120-122 (GHI) serves as a coordination point for (6S)-5,6,7,8-tetrahydrofolate. The residue at position 226 (Lys226) is an N6-(pyridoxal phosphate)lysine.

This sequence belongs to the SHMT family. In terms of assembly, homodimer. Requires pyridoxal 5'-phosphate as cofactor.

The protein resides in the cytoplasm. The protein operates within amino-acid biosynthesis; glycine biosynthesis; glycine from L-serine: step 1/1. Its function is as follows. Catalyzes the reversible interconversion of serine and glycine with a modified folate serving as the one-carbon carrier. Also exhibits a pteridine-independent aldolase activity toward beta-hydroxyamino acids, producing glycine and aldehydes, via a retro-aldol mechanism. This Pyrobaculum islandicum (strain DSM 4184 / JCM 9189 / GEO3) protein is Serine hydroxymethyltransferase.